The primary structure comprises 92 residues: Putative pterin-4-alpha-carbinolamine dehydratase (92 aa).

Belongs to the pterin-4-alpha-carbinolamine dehydratase family.

The enzyme catalyses (4aS,6R)-4a-hydroxy-L-erythro-5,6,7,8-tetrahydrobiopterin = (6R)-L-erythro-6,7-dihydrobiopterin + H2O. This is Putative pterin-4-alpha-carbinolamine dehydratase from Haloarcula marismortui (strain ATCC 43049 / DSM 3752 / JCM 8966 / VKM B-1809) (Halobacterium marismortui).